The chain runs to 219 residues: Ras-related protein Rab-3 (219 aa).

GTP is bound by residues 29–37 (GNSSVGKTS), 48–54 (TSAFVST), 77–81 (DTAGQ), 135–138 (NKCD), and 165–167 (SAK). An Effector region motif is present at residues 51–59 (FVSTVGIDF). A disordered region spans residues 191–219 (LDKDPQQQPKGQKLEANPTQKPAQQQCNC). Over residues 207-219 (NPTQKPAQQQCNC) the composition is skewed to polar residues. 2 S-geranylgeranyl cysteine lipidation sites follow: Cys217 and Cys219. Cys219 carries the post-translational modification Cysteine methyl ester.

Belongs to the small GTPase superfamily. Rab family.

It localises to the cell membrane. Involved in exocytosis by regulating a late step in synaptic vesicle fusion. Could play a role in neurotransmitter release by regulating membrane flow in the nerve terminal. Plays a role in the recruitment of endophilin unc-57 to synaptic vesicles. Probably by controlling dense-core vesicle trafficking, plays a role in the AVG neuron-mediated formation of the right axon tract of the ventral nerve cord. In Caenorhabditis elegans, this protein is Ras-related protein Rab-3 (rab-3).